A 161-amino-acid polypeptide reads, in one-letter code: Protein ZMO0507 (161 aa).

The protein belongs to the free Met sulfoxide reductase family.

The chain is Protein ZMO0507 from Zymomonas mobilis subsp. mobilis (strain ATCC 31821 / ZM4 / CP4).